The primary structure comprises 259 residues: MKAAVLAVALVFLTGCQAWEFWQQDEPQSQWDRVKDFATVYVDAVKDSGRDYVSQFESSTLGKQLNLNLLDNWDTLGSTVGRLQEQLGPVTQEFWANLEKETDWLRNEMNKDLENVKQKMQPHLDEFQEKWNEEVEAYRQKLEPLGTELHKNAKEMQRHLKVVAEEFRDRMRVNADALRAKFGLYSDQMRENLAQRLTEIKNHPTLIEYHTKASDHLKTLGEKAKPALDDLGQGLMPVLEAWKAKIMSMIDEAKKKLNA.

An N-terminal signal peptide occupies residues 1–18; that stretch reads MKAAVLAVALVFLTGCQA. Repeat copies occupy residues 67-88 and 89-110. The tract at residues 67-259 is 10 X approximate tandem repeats; that stretch reads LNLLDNWDTL…IDEAKKKLNA (193 aa). Met109 bears the Methionine sulfoxide mark. Residues 111–121 form a 3; half-length repeat; that stretch reads KDLENVKQKMQ. Repeat 4 spans residues 122 to 143; sequence PHLDEFQEKWNEEVEAYRQKLE. Residues 144–161 form a 5; truncated repeat; sequence PLGTELHKNAKEMQRHLK. Repeat unit 6 spans residues 162–183; it reads VVAEEFRDRMRVNADALRAKFG. The stretch at 184-203 is one 7; truncated repeat; sequence LYSDQMRENLAQRLTEIKNH. Met189 is subject to Methionine sulfoxide. Repeat unit 8 spans residues 204 to 225; it reads PTLIEYHTKASDHLKTLGEKAK. One copy of the 9; half-length repeat lies at 226–236; sequence PALDDLGQGLM. Position 236 is a methionine sulfoxide (Met236). The stretch at 237–259 is repeat 10; that stretch reads PVLEAWKAKIMSMIDEAKKKLNA.

This sequence belongs to the apolipoprotein A1/A4/E family. Homodimer. Interacts with APOA1BP and CLU. Component of a sperm activating protein complex (SPAP), consisting of APOA1, an immunoglobulin heavy chain, an immunoglobulin light chain and albumin. Interacts with NDRG1. Interacts with SCGB3A2. Interacts with NAXE and YJEFN3. Post-translationally, glycosylated. In terms of processing, palmitoylated. Phosphorylation sites are present in the extracellular medium. In terms of tissue distribution, major protein of plasma HDL, also found in chylomicrons.

The protein localises to the secreted. Functionally, participates in the reverse transport of cholesterol from tissues to the liver for excretion by promoting cholesterol efflux from tissues and by acting as a cofactor for the lecithin cholesterol acyltransferase (LCAT). As part of the SPAP complex, activates spermatozoa motility. The sequence is that of Apolipoprotein A-I (Apoa1) from Rattus norvegicus (Rat).